The chain runs to 664 residues: Macoilin (664 aa).

Helical transmembrane passes span 28–48 (TFLYLKFLVVWALVLLADFVL), 75–95 (AFSVFFVCVAFTSNIICLLFI), 120–140 (VCLPTVSLWILFVYIEAAIRF), and 154–174 (FAAHCIGYPVVTLGFGFKSYV). The segment covering 252–265 (YREKGKEKDKDAKK) has biased composition (basic and acidic residues). The tract at residues 252–274 (YREKGKEKDKDAKKHNLGINNNN) is disordered. Ser305 bears the Phosphoserine mark. The segment covering 320–348 (KNYKNASGVVNSSPRSHSATNGSIPSSSS) has biased composition (polar residues). The disordered stretch occupies residues 320–375 (KNYKNASGVVNSSPRSHSATNGSIPSSSSKNEKKQRCTSKGPSAHKDLMENCIPNN). Asn324 is a glycosylation site (N-linked (GlcNAc...) asparagine). Ser332 carries the phosphoserine modification. 2 N-linked (GlcNAc...) asparagine glycosylation sites follow: Asn340 and Asn452. The disordered stretch occupies residues 630–664 (TSPLSPVSPHYSSKFVETSPSGLDPNASVYQPLKK). Ser631 and Ser634 each carry phosphoserine. An N-linked (GlcNAc...) asparagine glycan is attached at Asn655.

The protein belongs to the macoilin family.

It is found in the rough endoplasmic reticulum membrane. The protein resides in the nucleus membrane. In terms of biological role, plays a role in the regulation of neuronal activity. The protein is Macoilin of Rattus norvegicus (Rat).